We begin with the raw amino-acid sequence, 317 residues long: Protein CbxX, plasmid (317 aa).

85-92 provides a ligand contact to ATP; the sequence is GNPGTGKT.

It belongs to the CbxX/CfxQ family.

Functionally, seems to be necessary for the expression of RuBisCO. The protein is Protein CbxX, plasmid (cbxXP) of Cupriavidus necator (strain ATCC 17699 / DSM 428 / KCTC 22496 / NCIMB 10442 / H16 / Stanier 337) (Ralstonia eutropha).